Consider the following 130-residue polypeptide: Small ribosomal subunit protein uS9 (130 aa).

The protein belongs to the universal ribosomal protein uS9 family.

The polypeptide is Small ribosomal subunit protein uS9 (Pseudomonas putida (strain W619)).